Consider the following 476-residue polypeptide: Membrane-bound lytic murein transglycosylase F (476 aa).

A signal peptide spans 1–22 (MTRFLFALILGFLLTACQQVTV). The interval 23–257 (DETEFVPKKL…HLNEKYFGHV (235 aa)) is non-LT domain. The LT domain stretch occupies residues 258–476 (KRFDYVDTRA…AGTLSPEQPK (219 aa)). The active site involves Glu302. The tract at residues 446 to 476 (SKQQNPEEEPSDLASEEPAIPAGTLSPEQPK) is disordered. Residues 451–460 (PEEEPSDLAS) are compositionally biased toward acidic residues.

The protein in the N-terminal section; belongs to the bacterial solute-binding protein 3 family. In the C-terminal section; belongs to the transglycosylase Slt family.

The protein resides in the cell outer membrane. The enzyme catalyses Exolytic cleavage of the (1-&gt;4)-beta-glycosidic linkage between N-acetylmuramic acid (MurNAc) and N-acetylglucosamine (GlcNAc) residues in peptidoglycan, from either the reducing or the non-reducing ends of the peptidoglycan chains, with concomitant formation of a 1,6-anhydrobond in the MurNAc residue.. In terms of biological role, murein-degrading enzyme that degrades murein glycan strands and insoluble, high-molecular weight murein sacculi, with the concomitant formation of a 1,6-anhydromuramoyl product. Lytic transglycosylases (LTs) play an integral role in the metabolism of the peptidoglycan (PG) sacculus. Their lytic action creates space within the PG sacculus to allow for its expansion as well as for the insertion of various structures such as secretion systems and flagella. This chain is Membrane-bound lytic murein transglycosylase F, found in Shewanella baltica (strain OS155 / ATCC BAA-1091).